An 851-amino-acid polypeptide reads, in one-letter code: M-phase phosphoprotein 8 (851 aa).

Positions 21–54 (NIGRSPEVEGGGAAGEEKDAATKGTVAVGDSEED) are disordered. Phosphoserine occurs at positions 51, 85, and 136. Positions 59-118 (FEVERILDMKCEGGKNLYKVRWKGYTSDDDTWEPEVHLEDCKEVLLEFRKKVAENKAKAV) constitute a Chromo domain. The segment at 80 to 87 (WKGYTSDD) is histone H3K9me3 binding. Positions 133-174 (EADSDIDQQGDTKEDTSPRKKKKKIKYKEDKSPDDLRKKRAK) are disordered. Residue threonine 144 is modified to Phosphothreonine. Phosphoserine; by CDK1 is present on residues serine 149 and serine 164. Residues 159–169 (YKEDKSPDDLR) are compositionally biased toward basic and acidic residues. Residues serine 188, serine 263, serine 267, and serine 274 each carry the phosphoserine modification. The tract at residues 240 to 302 (REDVKDNRKT…KTGQDTVQES (63 aa)) is disordered. The span at 269 to 278 (TLEDESEDFL) shows a compositional bias: acidic residues. Over residues 279–295 (SDNKEKQNVRTAKDKTG) the composition is skewed to basic and acidic residues. Residue serine 313 is modified to Phosphoserine. The tract at residues 315 to 428 (EEAGTRVRRK…DKEEKARKEP (114 aa)) is disordered. Over residues 329 to 364 (RKFEEPKEIKKLENTNNFLERKMIPKKQRNQDKGRS) the composition is skewed to basic and acidic residues. Threonine 379 is subject to Phosphothreonine; by CDK1. Serine 386 and serine 394 each carry phosphoserine. Positions 401–428 (EKERKNEPKEKYQKRYDFDKEEKARKEP) are enriched in basic and acidic residues. The residue at position 447 (threonine 447) is a Phosphothreonine. 4 ANK repeats span residues 591 to 620 (TGMT…KVNG), 624 to 653 (NGTT…FVNV), 657 to 686 (NGET…DCNI), and 690 to 719 (HQNS…TLSR).

Homodimer. Interacts (via chromo domain) with histone H3K9me3. Has the highest affinity for H3K9me3, and lesser affinity for H3K9me2 and H3K9me1. Component of the HUSH complex; at least composed of TASOR, PPHLN1 and MPHOSPH8. Interacts with DNMT3, EHMT1 and SETDB1. Interacts with MORC2; the interaction associateS MORC2 with the HUSH complex which recruits MORC2 to heterochromatic loci. Interacts with ZNF638; leading to recruitment of the HUSH complex to unintegrated retroviral DNA. Interacts with TASOR. Post-translationally, phosphorylated in M (mitotic) phase. Phosphorylation by CDK1 promotes dissociation from chromatin.

Its subcellular location is the nucleus. The protein localises to the chromosome. Heterochromatin component that specifically recognizes and binds methylated 'Lys-9' of histone H3 (H3K9me) and promotes recruitment of proteins that mediate epigenetic repression. Mediates recruitment of the HUSH complex to H3K9me3 sites: the HUSH complex is recruited to genomic loci rich in H3K9me3 and is required to maintain transcriptional silencing by promoting recruitment of SETDB1, a histone methyltransferase that mediates further deposition of H3K9me3, as well as MORC2. Binds H3K9me and promotes DNA methylation by recruiting DNMT3A to target CpG sites; these can be situated within the coding region of the gene. Mediates down-regulation of CDH1 expression. Also represses L1 retrotransposons in collaboration with MORC2 and, probably, SETDB1, the silencing is dependent of repressive epigenetic modifications, such as H3K9me3 mark. Silencing events often occur within introns of transcriptionally active genes, and lead to the down-regulation of host gene expression. The HUSH complex is also involved in the silencing of unintegrated retroviral DNA by being recruited by ZNF638: some part of the retroviral DNA formed immediately after infection remains unintegrated in the host genome and is transcriptionally repressed. This chain is M-phase phosphoprotein 8, found in Rattus norvegicus (Rat).